A 189-amino-acid chain; its full sequence is Shikimate kinase (189 aa).

Residue 22–27 (ASGKST) participates in ATP binding. Serine 26 serves as a coordination point for Mg(2+). Substrate contacts are provided by aspartate 44, arginine 68, and glycine 90. ATP is bound at residue arginine 128. Arginine 147 is a binding site for substrate.

The protein belongs to the shikimate kinase family. As to quaternary structure, monomer. The cofactor is Mg(2+).

Its subcellular location is the cytoplasm. The catalysed reaction is shikimate + ATP = 3-phosphoshikimate + ADP + H(+). It participates in metabolic intermediate biosynthesis; chorismate biosynthesis; chorismate from D-erythrose 4-phosphate and phosphoenolpyruvate: step 5/7. Catalyzes the specific phosphorylation of the 3-hydroxyl group of shikimic acid using ATP as a cosubstrate. This is Shikimate kinase from Synechococcus sp. (strain JA-3-3Ab) (Cyanobacteria bacterium Yellowstone A-Prime).